The primary structure comprises 340 residues: Phosphate acyltransferase (340 aa).

This sequence belongs to the PlsX family. In terms of assembly, homodimer. Probably interacts with PlsY.

It is found in the cytoplasm. It carries out the reaction a fatty acyl-[ACP] + phosphate = an acyl phosphate + holo-[ACP]. Its pathway is lipid metabolism; phospholipid metabolism. In terms of biological role, catalyzes the reversible formation of acyl-phosphate (acyl-PO(4)) from acyl-[acyl-carrier-protein] (acyl-ACP). This enzyme utilizes acyl-ACP as fatty acyl donor, but not acyl-CoA. In Helicobacter pylori (strain HPAG1), this protein is Phosphate acyltransferase.